A 571-amino-acid chain; its full sequence is Cytochrome P450 monooxygenase g430 (571 aa).

Residues 8–28 traverse the membrane as a helical segment; that stretch reads GALIWVVTSYILYAIISNFII. Residue cysteine 471 participates in heme binding. The disordered stretch occupies residues 552–571; the sequence is CPLPAEAKLPKSRKPIGTAS.

The protein belongs to the cytochrome P450 family. Heme is required as a cofactor.

It localises to the membrane. It functions in the pathway mycotoxin biosynthesis. Cytochrome P450 monooxygenase; part of the gene cluster that mediates the biosynthesis of 1233A, a natural compound known as an inhibitor of HMG-CoA synthase in the mevalonate pathway and with antibacterial and antifungal activities. The highly reducing polyketide synthase g433 is responsible for the 1233A backbone biosynthesis and the cytochrome P450 monooxygenase g430 catalyzes oxidation of the backbone. The sequence is that of Cytochrome P450 monooxygenase g430 from Fusarium sp.